The chain runs to 186 residues: Putative manganese efflux pump MntP (186 aa).

6 consecutive transmembrane segments (helical) span residues 1-21, 41-61, 62-82, 105-127, 139-159, and 163-183; these read MSFLTNFLLGLGLAMDAFAVS, VFFGGFQALMPVLGWVGGSAV, SGFVSDYAPWIAFGLLAFIGG, LFLLAVATSIDALAVGISFAFLG, CVTFVMSFCGAVLGYRIGHFF, and VEILGGLILIGLGVKILAEHM.

Belongs to the MntP (TC 9.B.29) family.

Its subcellular location is the cell membrane. In terms of biological role, probably functions as a manganese efflux pump. The protein is Putative manganese efflux pump MntP of Methanosarcina mazei (strain ATCC BAA-159 / DSM 3647 / Goe1 / Go1 / JCM 11833 / OCM 88) (Methanosarcina frisia).